The primary structure comprises 159 residues: 2-C-methyl-D-erythritol 2,4-cyclodiphosphate synthase (159 aa).

Residues D8 and H10 each coordinate a divalent metal cation. Residues 8-10 (DVH) and 34-35 (HS) contribute to the 4-CDP-2-C-methyl-D-erythritol 2-phosphate site. H42 is a binding site for a divalent metal cation. 4-CDP-2-C-methyl-D-erythritol 2-phosphate-binding positions include 56 to 58 (DIG), 61 to 65 (FPDTD), 100 to 106 (AQAPKML), 132 to 135 (TTTE), F139, and R142.

It belongs to the IspF family. In terms of assembly, homotrimer. A divalent metal cation serves as cofactor.

It catalyses the reaction 4-CDP-2-C-methyl-D-erythritol 2-phosphate = 2-C-methyl-D-erythritol 2,4-cyclic diphosphate + CMP. It participates in isoprenoid biosynthesis; isopentenyl diphosphate biosynthesis via DXP pathway; isopentenyl diphosphate from 1-deoxy-D-xylulose 5-phosphate: step 4/6. Involved in the biosynthesis of isopentenyl diphosphate (IPP) and dimethylallyl diphosphate (DMAPP), two major building blocks of isoprenoid compounds. Catalyzes the conversion of 4-diphosphocytidyl-2-C-methyl-D-erythritol 2-phosphate (CDP-ME2P) to 2-C-methyl-D-erythritol 2,4-cyclodiphosphate (ME-CPP) with a corresponding release of cytidine 5-monophosphate (CMP). In Salmonella dublin (strain CT_02021853), this protein is 2-C-methyl-D-erythritol 2,4-cyclodiphosphate synthase.